Reading from the N-terminus, the 326-residue chain is NAD kinase (326 aa).

D93 serves as the catalytic Proton acceptor. NAD(+) contacts are provided by residues D93–G94, R98, N171–E172, R182, D201, and T212–S217.

The protein belongs to the NAD kinase family. A divalent metal cation is required as a cofactor.

It localises to the cytoplasm. The catalysed reaction is NAD(+) + ATP = ADP + NADP(+) + H(+). In terms of biological role, involved in the regulation of the intracellular balance of NAD and NADP, and is a key enzyme in the biosynthesis of NADP. Catalyzes specifically the phosphorylation on 2'-hydroxyl of the adenosine moiety of NAD to yield NADP. This chain is NAD kinase, found in Thermobifida fusca (strain YX).